Reading from the N-terminus, the 645-residue chain is MDGTVTLSSTPTAIPPVSALDAGKPTLPPEAPLAMPEQNLREGSLQVRHQRTSPPGIGMRRFYLIGGTFAATAVAVWVMLSVLWPDGISVLEGCLLCLFTLLFAWIAMSFASAVAGFVTVVARAGRKLGIDPEEPLPTLRSRTALLMPTYNEDPRRLLAGLQAIYESVAETGQLEHFDFFVLSDTTREHIGRAEELVYSELCDRVDGHGRIFYRRRADNAARKAGNVADWVRRFGGRYPQMLILDADSVMTGDTIVRLVAGMENNPDVGLIQTLPAVVNGQTLFARMQQFGGRVYGPIIAFGVAWWHGAESNYWGHNAIIRTHAFADHAGLPSLRGRKPFGGHVLSHDFVEAALMRRGGWAMHMVPYLQGSYEEGPPTLTDLLIRDRRWCQGNLQHAKVVSAKGLHWISRMHMLIGIGHYFTAPMWGLLMLIGIGIPLAGVGIDLAGDLPFSPARYWHGSSQGNAIWIFICTMFVLLAPKLLGYIALLLNPRELRACGGAFRAAVSILLETVLAALMAPVVMYLQSRGVFEVLAGKDSGWDAQVRDDGKLSWPALLRSYGGLTVFGLFMGAVAYAVSPALAAWMGPVIVGMALSIPVVALTSLRRTGMALRRAGIFCIPEELDPPKVLVRASELRRAAVLEPSLI.

Residues 1 to 12 show a composition bias toward polar residues; the sequence is MDGTVTLSSTPT. A disordered region spans residues 1–22; sequence MDGTVTLSSTPTAIPPVSALDA. The next 7 helical transmembrane spans lie at 64–84, 98–118, 423–443, 465–485, 504–524, 559–579, and 580–600; these read LIGG…SVLW, LFTL…AGFV, APMW…GVGI, AIWI…LGYI, AVSI…VMYL, YGGL…VSPA, and LAAW…VVAL.

The protein belongs to the glycosyltransferase 2 family. OpgH subfamily.

The protein localises to the cell inner membrane. Its pathway is glycan metabolism; osmoregulated periplasmic glucan (OPG) biosynthesis. Functionally, involved in the biosynthesis of osmoregulated periplasmic glucans (OPGs). In Xanthomonas oryzae pv. oryzae (strain MAFF 311018), this protein is Glucans biosynthesis glucosyltransferase H.